The following is a 273-amino-acid chain: Formamidopyrimidine-DNA glycosylase (273 aa).

Pro2 serves as the catalytic Schiff-base intermediate with DNA. Glu3 (proton donor) is an active-site residue. Lys57 functions as the Proton donor; for beta-elimination activity in the catalytic mechanism. Residues His91, Arg110, and Lys151 each coordinate DNA. The segment at 236-270 adopts an FPG-type zinc-finger fold; the sequence is QVYGRKDEACNDCGTIIEAKVIGQRNSYFCPHCQM. The active-site Proton donor; for delta-elimination activity is Arg260.

This sequence belongs to the FPG family. Monomer. Zn(2+) serves as cofactor.

The enzyme catalyses Hydrolysis of DNA containing ring-opened 7-methylguanine residues, releasing 2,6-diamino-4-hydroxy-5-(N-methyl)formamidopyrimidine.. It carries out the reaction 2'-deoxyribonucleotide-(2'-deoxyribose 5'-phosphate)-2'-deoxyribonucleotide-DNA = a 3'-end 2'-deoxyribonucleotide-(2,3-dehydro-2,3-deoxyribose 5'-phosphate)-DNA + a 5'-end 5'-phospho-2'-deoxyribonucleoside-DNA + H(+). Functionally, involved in base excision repair of DNA damaged by oxidation or by mutagenic agents. Acts as a DNA glycosylase that recognizes and removes damaged bases. Has a preference for oxidized purines, such as 7,8-dihydro-8-oxoguanine (8-oxoG). Has AP (apurinic/apyrimidinic) lyase activity and introduces nicks in the DNA strand. Cleaves the DNA backbone by beta-delta elimination to generate a single-strand break at the site of the removed base with both 3'- and 5'-phosphates. This is Formamidopyrimidine-DNA glycosylase from Actinobacillus pleuropneumoniae serotype 3 (strain JL03).